The chain runs to 459 residues: Bifunctional protein GlmU (459 aa).

The segment at Met-1–Arg-229 is pyrophosphorylase. Residues Leu-8 to Gly-11, Lys-22, Gln-72, and Gly-77 to Thr-78 each bind UDP-N-acetyl-alpha-D-glucosamine. Residue Asp-102 participates in Mg(2+) binding. The UDP-N-acetyl-alpha-D-glucosamine site is built by Gly-139, Glu-154, Asn-169, and Asn-227. Mg(2+) is bound at residue Asn-227. The interval Val-230–Asn-250 is linker. The segment at Gly-251–Lys-459 is N-acetyltransferase. UDP-N-acetyl-alpha-D-glucosamine is bound by residues Arg-332 and Lys-350. The active-site Proton acceptor is His-362. The UDP-N-acetyl-alpha-D-glucosamine site is built by Tyr-365 and Asn-376. Acetyl-CoA-binding positions include Ala-379, Asn-385–Tyr-386, Ser-404, Ala-422, and Arg-439.

It in the N-terminal section; belongs to the N-acetylglucosamine-1-phosphate uridyltransferase family. In the C-terminal section; belongs to the transferase hexapeptide repeat family. Homotrimer. It depends on Mg(2+) as a cofactor.

It is found in the cytoplasm. The enzyme catalyses alpha-D-glucosamine 1-phosphate + acetyl-CoA = N-acetyl-alpha-D-glucosamine 1-phosphate + CoA + H(+). It carries out the reaction N-acetyl-alpha-D-glucosamine 1-phosphate + UTP + H(+) = UDP-N-acetyl-alpha-D-glucosamine + diphosphate. The protein operates within nucleotide-sugar biosynthesis; UDP-N-acetyl-alpha-D-glucosamine biosynthesis; N-acetyl-alpha-D-glucosamine 1-phosphate from alpha-D-glucosamine 6-phosphate (route II): step 2/2. Its pathway is nucleotide-sugar biosynthesis; UDP-N-acetyl-alpha-D-glucosamine biosynthesis; UDP-N-acetyl-alpha-D-glucosamine from N-acetyl-alpha-D-glucosamine 1-phosphate: step 1/1. It participates in bacterial outer membrane biogenesis; LPS lipid A biosynthesis. Functionally, catalyzes the last two sequential reactions in the de novo biosynthetic pathway for UDP-N-acetylglucosamine (UDP-GlcNAc). The C-terminal domain catalyzes the transfer of acetyl group from acetyl coenzyme A to glucosamine-1-phosphate (GlcN-1-P) to produce N-acetylglucosamine-1-phosphate (GlcNAc-1-P), which is converted into UDP-GlcNAc by the transfer of uridine 5-monophosphate (from uridine 5-triphosphate), a reaction catalyzed by the N-terminal domain. The sequence is that of Bifunctional protein GlmU from Streptococcus mutans serotype c (strain ATCC 700610 / UA159).